Consider the following 233-residue polypeptide: MPSSAHLQDSPPLLSRTLTQNEGQTSLRQSSSCGPSATSASESLSGYTESRIPHSEMLQEKFHGIILPESPAKLLCCCAVIVVLSVAVVALSVALSVKKTPQISTVKTYAACPRNWIGVGNKCYYFNETARNWTFSQTLCKEQEAELARFDTEEELNFLRRYKGSPGCWIGLHRESSAHNWTWTDNTAYNKLLPIRGVEKHGFLSDNGISSSRDYIKRNSICSKLNSYTSQCQ.

Residues 1–45 (MPSSAHLQDSPPLLSRTLTQNEGQTSLRQSSSCGPSATSASESLS) are disordered. At 1–73 (MPSSAHLQDS…GIILPESPAK (73 aa)) the chain is on the cytoplasmic side. The span at 16 to 29 (RTLTQNEGQTSLRQ) shows a compositional bias: polar residues. Residues 30-43 (SSSCGPSATSASES) show a composition bias toward low complexity. A helical; Signal-anchor for type II membrane protein membrane pass occupies residues 74–94 (LLCCCAVIVVLSVAVVALSVA). The Extracellular segment spans residues 95 to 233 (LSVKKTPQIS…KLNSYTSQCQ (139 aa)). A C-type lectin domain is found at 119–230 (VGNKCYYFNE…ICSKLNSYTS (112 aa)). N132 carries N-linked (GlcNAc...) asparagine glycosylation.

The protein resides in the cell membrane. In terms of biological role, lectin-type cell surface receptor. The sequence is that of C-type lectin domain family 2 member D6 (Clec2d6) from Rattus norvegicus (Rat).